A 382-amino-acid polypeptide reads, in one-letter code: ORC1-type DNA replication protein 1 (382 aa).

Residues 63–67 (TGKTA), Tyr205, and Arg217 contribute to the ATP site.

Belongs to the CDC6/cdc18 family. In terms of assembly, monomer. Interacts with MCM via the WH domain. In terms of processing, autophosphorylated on a serine. Phosphorylation is stimulated by binding to MCM. Both single-stranded DNA and double-stranded DNA inhibit the phosphorylation reaction.

In terms of biological role, involved in regulation of DNA replication. May play an essential role in origin recognition. Binds to DNA, with a preference for origin-specific double-stranded sequences. Does not bind single-stranded DNA. Inhibits MCM helicase activity but does not affect its oligomeric state. This is ORC1-type DNA replication protein 1 (cdc6-1) from Methanothermobacter thermautotrophicus (strain ATCC 29096 / DSM 1053 / JCM 10044 / NBRC 100330 / Delta H) (Methanobacterium thermoautotrophicum).